The following is a 486-amino-acid chain: Glutamate--tRNA ligase (486 aa).

Residues 12–22 (PSPTGTPHVGL) carry the 'HIGH' region motif. Residues 256–260 (KLSKR) carry the 'KMSKS' region motif. Lysine 259 contributes to the ATP binding site.

It belongs to the class-I aminoacyl-tRNA synthetase family. Glutamate--tRNA ligase type 1 subfamily. As to quaternary structure, monomer.

It localises to the cytoplasm. The catalysed reaction is tRNA(Glu) + L-glutamate + ATP = L-glutamyl-tRNA(Glu) + AMP + diphosphate. Catalyzes the attachment of glutamate to tRNA(Glu) in a two-step reaction: glutamate is first activated by ATP to form Glu-AMP and then transferred to the acceptor end of tRNA(Glu). The chain is Glutamate--tRNA ligase from Mycolicibacterium smegmatis (strain ATCC 700084 / mc(2)155) (Mycobacterium smegmatis).